Reading from the N-terminus, the 596-residue chain is Interleukin-1 receptor-associated kinase 3 (596 aa).

Residues 41-106 form the Death domain; that stretch reads WRGLAERLSS…RAIHLITNYG (66 aa). Ser-110 bears the Phosphoserine; by IRAK1 mark. The Protein kinase domain occupies 165 to 452; that stretch reads FHKDFLIGEG…LESTQASLYF (288 aa). ATP contacts are provided by residues 171-179, Lys-192, 295-298, and Asp-311; these read IGEGEIFEV and SSAN. Ser-467 carries the post-translational modification Phosphoserine. The interval 560–596 is disordered; sequence NIDPSSEAPGHSCRSRPVESSCSSKFSWDEYEQYKKE.

Belongs to the protein kinase superfamily. TKL Ser/Thr protein kinase family. Pelle subfamily. Monomer. Homodimer; disulfide-linked. May interact with IRAK4 (when phosphorylated). Interacts (when phosphorylated at Ser-110) with PIN1 (via WW domain) in response to IL33-mediated (but not TLR4 ligand LPS) dendritic cell stimulation. In terms of tissue distribution, expressed in eosinophils, dendritic cells and/or monocytes (at protein level). Expressed predominantly in peripheral blood lymphocytes.

It localises to the cytoplasm. The protein resides in the nucleus. Putative inactive protein kinase which regulates signaling downstream of immune receptors including IL1R and Toll-like receptors. Inhibits dissociation of IRAK1 and IRAK4 from the Toll-like receptor signaling complex by either inhibiting the phosphorylation of IRAK1 and IRAK4 or stabilizing the receptor complex. Upon IL33-induced lung inflammation, positively regulates expression of IL6, CSF3, CXCL2 and CCL5 mRNAs in dendritic cells. This Homo sapiens (Human) protein is Interleukin-1 receptor-associated kinase 3.